We begin with the raw amino-acid sequence, 932 residues long: 2-oxoglutarate dehydrogenase E1 component (932 aa).

This sequence belongs to the alpha-ketoglutarate dehydrogenase family. In terms of assembly, homodimer. Part of the 2-oxoglutarate dehydrogenase (OGDH) complex composed of E1 (2-oxoglutarate dehydrogenase), E2 (dihydrolipoamide succinyltransferase) and E3 (dihydrolipoamide dehydrogenase); the complex contains multiple copies of the three enzymatic components (E1, E2 and E3). Thiamine diphosphate is required as a cofactor.

The enzyme catalyses N(6)-[(R)-lipoyl]-L-lysyl-[protein] + 2-oxoglutarate + H(+) = N(6)-[(R)-S(8)-succinyldihydrolipoyl]-L-lysyl-[protein] + CO2. In terms of biological role, E1 component of the 2-oxoglutarate dehydrogenase (OGDH) complex which catalyzes the decarboxylation of 2-oxoglutarate, the first step in the conversion of 2-oxoglutarate to succinyl-CoA and CO(2). The polypeptide is 2-oxoglutarate dehydrogenase E1 component (Staphylococcus aureus (strain MRSA252)).